We begin with the raw amino-acid sequence, 93 residues long: Small ribosomal subunit protein bS16 (93 aa).

Belongs to the bacterial ribosomal protein bS16 family.

This Roseiflexus castenholzii (strain DSM 13941 / HLO8) protein is Small ribosomal subunit protein bS16.